Here is a 49-residue protein sequence, read N- to C-terminus: U3-plectoxin-Pt1a (49 aa).

Intrachain disulfides connect Cys-2–Cys-16, Cys-9–Cys-30, Cys-15–Cys-41, Cys-32–Cys-39, and Cys-45–Cys-49.

Expressed by the venom gland.

It is found in the secreted. Potent toxin that may paralyze and/or kill insect pests such as H.virescens (lepidoptera), S.exigua (beet armyworm) and M.sexta (tobacco hornworm). The polypeptide is U3-plectoxin-Pt1a (Plectreurys tristis (Spider)).